The primary structure comprises 122 residues: Large ribosomal subunit protein uL14 (122 aa).

The protein belongs to the universal ribosomal protein uL14 family. As to quaternary structure, part of the 50S ribosomal subunit. Forms a cluster with proteins L3 and L19. In the 70S ribosome, L14 and L19 interact and together make contacts with the 16S rRNA in bridges B5 and B8.

Binds to 23S rRNA. Forms part of two intersubunit bridges in the 70S ribosome. The protein is Large ribosomal subunit protein uL14 of Sulfurovum sp. (strain NBC37-1).